The primary structure comprises 432 residues: UDP-glucose 6-dehydrogenase (432 aa).

Residues 2 to 19 (NITF…GIIM), valine 11, aspartate 30, lysine 35, threonine 121, and glutamate 152 contribute to the NAD(+) site. Substrate-binding positions include 148 to 152 (EFLRE), lysine 202, asparagine 206, 247 to 251 (FLNAG), and glycine 255. The active-site Nucleophile is the cysteine 258. Lysine 261 provides a ligand contact to NAD(+). Position 319 (lysine 319) interacts with substrate. Position 326 (arginine 326) interacts with NAD(+).

Belongs to the UDP-glucose/GDP-mannose dehydrogenase family.

The catalysed reaction is UDP-alpha-D-glucose + 2 NAD(+) + H2O = UDP-alpha-D-glucuronate + 2 NADH + 3 H(+). Its pathway is nucleotide-sugar biosynthesis; UDP-alpha-D-glucuronate biosynthesis; UDP-alpha-D-glucuronate from UDP-alpha-D-glucose: step 1/1. The chain is UDP-glucose 6-dehydrogenase (udg) from Rickettsia conorii (strain ATCC VR-613 / Malish 7).